Here is an 825-residue protein sequence, read N- to C-terminus: Probable inorganic carbon transporter subunit DabA (825 aa).

Positions 334, 336, 521, and 536 each coordinate Zn(2+).

The protein belongs to the inorganic carbon transporter (TC 9.A.2) DabA family. In terms of assembly, forms a complex with DabB. Requires Zn(2+) as cofactor.

It is found in the cell inner membrane. In terms of biological role, part of an energy-coupled inorganic carbon pump. This is Probable inorganic carbon transporter subunit DabA from Acidithiobacillus ferrooxidans (strain ATCC 53993 / BNL-5-31) (Leptospirillum ferrooxidans (ATCC 53993)).